The chain runs to 448 residues: Homogentisate 1,2-dioxygenase (448 aa).

The active-site Proton acceptor is His303. 2 residues coordinate Fe cation: His346 and Glu352. 2 residues coordinate homogentisate: Tyr361 and His382. His382 is a Fe cation binding site.

Belongs to the homogentisate dioxygenase family. Hexamer; dimer of trimers. Fe cation is required as a cofactor.

The enzyme catalyses homogentisate + O2 = 4-maleylacetoacetate + H(+). It functions in the pathway amino-acid degradation; L-phenylalanine degradation; acetoacetate and fumarate from L-phenylalanine: step 4/6. Its function is as follows. Involved in the catabolism of homogentisate (2,5-dihydroxyphenylacetate or 2,5-OH-PhAc), a central intermediate in the degradation of phenylalanine and tyrosine. Catalyzes the oxidative ring cleavage of the aromatic ring of homogentisate to yield maleylacetoacetate. The protein is Homogentisate 1,2-dioxygenase of Bradyrhizobium diazoefficiens (strain JCM 10833 / BCRC 13528 / IAM 13628 / NBRC 14792 / USDA 110).